The following is a 373-amino-acid chain: MNLNKIRKFFRESHIFFRDFLNKRFPPYNVEQPIPETEEFTLINADANLASLTENVLPNFPIDVVFTWVDNTDKAWQEQYYRTLQPIDQEDIGLYATDPARFSNHNELFYSVQAVQKFMPWVRNIFIVTADQKPKWLDENIHSKIKLINHSQLIDAKYLPTFNSHVIEANLYKIPDLSEHFIYFNDDVFVARPLMPNHFFENNGLASLFVANKSFQKMRQRGLITPTLTASEHALKLLKRHYPTININTPLVHTYVPLRKTSFQKAWSLFEDEINSFLNNKVRHNSELNMASFLIPWLMYLDGYATPKREICYYFNIRSSHAQTQYKKLLFEKEHLHMPHSFCINDSSSNNADKNYALHFRNFMDTYFEIETE.

This sequence belongs to the stealth family.

Its function is as follows. Part of a capsule gene locus. Expression was not detected under standard growth conditions. This Neisseria meningitidis serogroup B protein is Capsular polysaccharide phosphotransferase.